We begin with the raw amino-acid sequence, 372 residues long: Queuine tRNA-ribosyltransferase (372 aa).

Residue aspartate 90 is the Proton acceptor of the active site. Residues 90-94 (DSGGF), aspartate 144, glutamine 193, and glycine 220 each bind substrate. Residues 251 to 257 (GVGTPED) form an RNA binding region. The active-site Nucleophile is the aspartate 270. Residues 275–279 (TRNAR) form an RNA binding; important for wobble base 34 recognition region. Zn(2+) is bound by residues cysteine 308, cysteine 310, cysteine 313, and histidine 339.

This sequence belongs to the queuine tRNA-ribosyltransferase family. As to quaternary structure, homodimer. Within each dimer, one monomer is responsible for RNA recognition and catalysis, while the other monomer binds to the replacement base PreQ1. Zn(2+) is required as a cofactor.

It catalyses the reaction 7-aminomethyl-7-carbaguanine + guanosine(34) in tRNA = 7-aminomethyl-7-carbaguanosine(34) in tRNA + guanine. Its pathway is tRNA modification; tRNA-queuosine biosynthesis. In terms of biological role, catalyzes the base-exchange of a guanine (G) residue with the queuine precursor 7-aminomethyl-7-deazaguanine (PreQ1) at position 34 (anticodon wobble position) in tRNAs with GU(N) anticodons (tRNA-Asp, -Asn, -His and -Tyr). Catalysis occurs through a double-displacement mechanism. The nucleophile active site attacks the C1' of nucleotide 34 to detach the guanine base from the RNA, forming a covalent enzyme-RNA intermediate. The proton acceptor active site deprotonates the incoming PreQ1, allowing a nucleophilic attack on the C1' of the ribose to form the product. After dissociation, two additional enzymatic reactions on the tRNA convert PreQ1 to queuine (Q), resulting in the hypermodified nucleoside queuosine (7-(((4,5-cis-dihydroxy-2-cyclopenten-1-yl)amino)methyl)-7-deazaguanosine). This Sulfurimonas denitrificans (strain ATCC 33889 / DSM 1251) (Thiomicrospira denitrificans (strain ATCC 33889 / DSM 1251)) protein is Queuine tRNA-ribosyltransferase.